We begin with the raw amino-acid sequence, 363 residues long: MSISGIIAEYNPFHTGHKYLLEQAEGLKIVVMSGNFMQRGEPAIVDKWTRAQMALEHGADLVVEMPFLVSVQSADHFAKGAISILHRLGVEKLVFGTEEMLDYQKIADIYVDKSEEMENFVKNLPDNFSYPQKTQAMWQEFAGLTFTGDTPNHILALAYAKGVAGTGIQLSPVQRQGAGFHSEEVETSYASAIAIRKGADQLDLVRDFLPSASLFEEATKVSWRNYFPLLRYQITTHPDLSQVFQVNEELASRIRSAIGSVATVEELVEAVTTKRYTKARVRRVLTYILINAVETPLPDAVHVLGFSARGQAYLKQVKERVGLVTRIGKEPWDSLTQQADLVYQLGADAMAEQTYGRVPVRVE.

Residues 7-20, Gly-96, Asn-152, and Arg-175 contribute to the ATP site; that span reads IAEY…HKYL.

Belongs to the TmcAL family.

It localises to the cytoplasm. It carries out the reaction cytidine(34) in elongator tRNA(Met) + acetate + ATP = N(4)-acetylcytidine(34) in elongator tRNA(Met) + AMP + diphosphate. Its function is as follows. Catalyzes the formation of N(4)-acetylcytidine (ac(4)C) at the wobble position of elongator tRNA(Met), using acetate and ATP as substrates. First activates an acetate ion to form acetyladenylate (Ac-AMP) and then transfers the acetyl group to tRNA to form ac(4)C34. This Streptococcus suis (strain 98HAH33) protein is tRNA(Met) cytidine acetate ligase.